Consider the following 274-residue polypeptide: tRNA-cytidine(32) 2-sulfurtransferase (274 aa).

The PP-loop motif signature appears at 40 to 45 (SGGKDS). Positions 115, 118, and 206 each coordinate [4Fe-4S] cluster.

Belongs to the TtcA family. As to quaternary structure, homodimer. It depends on Mg(2+) as a cofactor. Requires [4Fe-4S] cluster as cofactor.

The protein resides in the cytoplasm. The catalysed reaction is cytidine(32) in tRNA + S-sulfanyl-L-cysteinyl-[cysteine desulfurase] + AH2 + ATP = 2-thiocytidine(32) in tRNA + L-cysteinyl-[cysteine desulfurase] + A + AMP + diphosphate + H(+). Its pathway is tRNA modification. In terms of biological role, catalyzes the ATP-dependent 2-thiolation of cytidine in position 32 of tRNA, to form 2-thiocytidine (s(2)C32). The sulfur atoms are provided by the cysteine/cysteine desulfurase (IscS) system. The protein is tRNA-cytidine(32) 2-sulfurtransferase of Pseudomonas fluorescens (strain Pf0-1).